The following is a 151-amino-acid chain: Large-conductance mechanosensitive channel (151 aa).

2 helical membrane-spanning segments follow: residues 14–34 (VVDM…VNSL) and 85–105 (GLFV…FLLV).

This sequence belongs to the MscL family. Homopentamer.

The protein resides in the cell inner membrane. In terms of biological role, channel that opens in response to stretch forces in the membrane lipid bilayer. May participate in the regulation of osmotic pressure changes within the cell. The protein is Large-conductance mechanosensitive channel of Chlorobaculum tepidum (strain ATCC 49652 / DSM 12025 / NBRC 103806 / TLS) (Chlorobium tepidum).